The chain runs to 319 residues: Ribosomal RNA small subunit methyltransferase H (319 aa).

Residues 52–54 (GGH), Asp70, Phe100, Asp126, and Gln133 each bind S-adenosyl-L-methionine. The disordered stretch occupies residues 289–319 (PKPLSPSELERQRNPRARSAKLRVAARSSQM).

The protein belongs to the methyltransferase superfamily. RsmH family.

The protein localises to the cytoplasm. It carries out the reaction cytidine(1402) in 16S rRNA + S-adenosyl-L-methionine = N(4)-methylcytidine(1402) in 16S rRNA + S-adenosyl-L-homocysteine + H(+). Specifically methylates the N4 position of cytidine in position 1402 (C1402) of 16S rRNA. The polypeptide is Ribosomal RNA small subunit methyltransferase H (Synechococcus sp. (strain JA-2-3B'a(2-13)) (Cyanobacteria bacterium Yellowstone B-Prime)).